The primary structure comprises 200 residues: Octanoyltransferase (200 aa).

The 174-residue stretch at 27-200 (GAEDDQLWLV…WAELFSARWR (174 aa)) folds into the BPL/LPL catalytic domain. Substrate contacts are provided by residues 66-73 (RGGQITYH), 134-136 (SLG), and 147-149 (GIA). Residue cysteine 165 is the Acyl-thioester intermediate of the active site.

The protein belongs to the LipB family.

The protein resides in the cytoplasm. The enzyme catalyses octanoyl-[ACP] + L-lysyl-[protein] = N(6)-octanoyl-L-lysyl-[protein] + holo-[ACP] + H(+). The protein operates within protein modification; protein lipoylation via endogenous pathway; protein N(6)-(lipoyl)lysine from octanoyl-[acyl-carrier-protein]: step 1/2. Catalyzes the transfer of endogenously produced octanoic acid from octanoyl-acyl-carrier-protein onto the lipoyl domains of lipoate-dependent enzymes. Lipoyl-ACP can also act as a substrate although octanoyl-ACP is likely to be the physiological substrate. The polypeptide is Octanoyltransferase (Dichelobacter nodosus (strain VCS1703A)).